Consider the following 503-residue polypeptide: ATP synthase subunit alpha (503 aa).

170 to 177 (GDRQTGKT) is a binding site for ATP.

Belongs to the ATPase alpha/beta chains family. F-type ATPases have 2 components, CF(1) - the catalytic core - and CF(0) - the membrane proton channel. CF(1) has five subunits: alpha(3), beta(3), gamma(1), delta(1), epsilon(1). CF(0) has three main subunits: a(1), b(2) and c(9-12). The alpha and beta chains form an alternating ring which encloses part of the gamma chain. CF(1) is attached to CF(0) by a central stalk formed by the gamma and epsilon chains, while a peripheral stalk is formed by the delta and b chains.

The protein resides in the cell inner membrane. It catalyses the reaction ATP + H2O + 4 H(+)(in) = ADP + phosphate + 5 H(+)(out). Functionally, produces ATP from ADP in the presence of a proton gradient across the membrane. The alpha chain is a regulatory subunit. This Thermotoga maritima (strain ATCC 43589 / DSM 3109 / JCM 10099 / NBRC 100826 / MSB8) protein is ATP synthase subunit alpha.